The following is a 1105-amino-acid chain: Mediator of RNA polymerase II transcription subunit 14 (1105 aa).

The tract at residues 28–48 (ASQQANGGIYRNGIGKKSHSP) is disordered.

This sequence belongs to the Mediator complex subunit 14 family. In terms of assembly, component of the Mediator complex.

It localises to the nucleus. Its function is as follows. Component of the Mediator complex, a coactivator involved in the regulated transcription of nearly all RNA polymerase II-dependent genes. Mediator functions as a bridge to convey information from gene-specific regulatory proteins to the basal RNA polymerase II transcription machinery. Mediator is recruited to promoters by direct interactions with regulatory proteins and serves as a scaffold for the assembly of a functional preinitiation complex with RNA polymerase II and the general transcription factors. This Coccidioides immitis (strain RS) (Valley fever fungus) protein is Mediator of RNA polymerase II transcription subunit 14 (RGR1).